The following is a 264-amino-acid chain: MKQYLDLLNHVMEKGSDRGDRTGTGTRSVFGYQMRFDLEEGFPVLTTKKLHLRSIIHELLWFLKGETNIRYLKENGVSIWDEWADENGDLGPVYGAQWRSWPAPDGGHIDQIANLVKGIVNNPNSRRHIVSAWNPAEVDEMALPPCHCLFQFYVADGKLSCQLYQRSADIFLGVPFNISSYALLTMMVAQVVGLKPGDFVHTLGDAHLYHNHFDQAKLQLARRPKPLPFMRIKPDVKDIFGFTFDDFELIGYEADASIKAPIAV.

A dUMP-binding site is contributed by R21. H51 provides a ligand contact to (6R)-5,10-methylene-5,6,7,8-tetrahydrofolate. 126–127 (RR) provides a ligand contact to dUMP. C146 (nucleophile) is an active-site residue. DUMP-binding positions include 166–169 (RSAD), N177, and 207–209 (HLY). (6R)-5,10-methylene-5,6,7,8-tetrahydrofolate is bound at residue D169. A263 contributes to the (6R)-5,10-methylene-5,6,7,8-tetrahydrofolate binding site.

The protein belongs to the thymidylate synthase family. Bacterial-type ThyA subfamily. In terms of assembly, homodimer.

It is found in the cytoplasm. It catalyses the reaction dUMP + (6R)-5,10-methylene-5,6,7,8-tetrahydrofolate = 7,8-dihydrofolate + dTMP. It functions in the pathway pyrimidine metabolism; dTTP biosynthesis. Catalyzes the reductive methylation of 2'-deoxyuridine-5'-monophosphate (dUMP) to 2'-deoxythymidine-5'-monophosphate (dTMP) while utilizing 5,10-methylenetetrahydrofolate (mTHF) as the methyl donor and reductant in the reaction, yielding dihydrofolate (DHF) as a by-product. This enzymatic reaction provides an intracellular de novo source of dTMP, an essential precursor for DNA biosynthesis. The sequence is that of Thymidylate synthase from Rhizobium johnstonii (strain DSM 114642 / LMG 32736 / 3841) (Rhizobium leguminosarum bv. viciae).